Here is a 290-residue protein sequence, read N- to C-terminus: 4-hydroxy-tetrahydrodipicolinate synthase (290 aa).

Threonine 44 contacts pyruvate. The active-site Proton donor/acceptor is the tyrosine 132. The Schiff-base intermediate with substrate role is filled by lysine 160. Isoleucine 202 lines the pyruvate pocket.

The protein belongs to the DapA family. Homotetramer; dimer of dimers.

The protein resides in the cytoplasm. It catalyses the reaction L-aspartate 4-semialdehyde + pyruvate = (2S,4S)-4-hydroxy-2,3,4,5-tetrahydrodipicolinate + H2O + H(+). Its pathway is amino-acid biosynthesis; L-lysine biosynthesis via DAP pathway; (S)-tetrahydrodipicolinate from L-aspartate: step 3/4. Functionally, catalyzes the condensation of (S)-aspartate-beta-semialdehyde [(S)-ASA] and pyruvate to 4-hydroxy-tetrahydrodipicolinate (HTPA). This chain is 4-hydroxy-tetrahydrodipicolinate synthase, found in Legionella pneumophila subsp. pneumophila (strain Philadelphia 1 / ATCC 33152 / DSM 7513).